Reading from the N-terminus, the 286-residue chain is Probable endonuclease 4 (286 aa).

Positions 72, 112, 147, 181, 184, 215, 228, 230, and 260 each coordinate Zn(2+).

This sequence belongs to the AP endonuclease 2 family. Requires Zn(2+) as cofactor.

It carries out the reaction Endonucleolytic cleavage to 5'-phosphooligonucleotide end-products.. Functionally, endonuclease IV plays a role in DNA repair. It cleaves phosphodiester bonds at apurinic or apyrimidinic (AP) sites, generating a 3'-hydroxyl group and a 5'-terminal sugar phosphate. In Mycoplasma pneumoniae (strain ATCC 29342 / M129 / Subtype 1) (Mycoplasmoides pneumoniae), this protein is Probable endonuclease 4.